Consider the following 1015-residue polypeptide: DNA ligase 3 (1015 aa).

The PARP-type zinc finger occupies F94 to S186. The Zn(2+) site is built by C106, C109, H140, and C143. Residues S211, S217, S228, and S244 each carry the phosphoserine modification. Positions G229–K255 are disordered. Positions K234–A253 are enriched in polar residues. Interaction with DNA regions lie at residues P279–N282, V323–D328, T393–D396, and K426–K432. Position 511 (E511) interacts with ATP. Catalysis depends on K513, which acts as the N6-AMP-lysine intermediate. ATP-binding residues include R518 and R533. Positions 565 and 660 each coordinate Mg(2+). ATP-binding residues include K665, R676, and K680. The tract at residues D849–K926 is disordered. Residues T854 to K884 show a composition bias toward low complexity. Residue S919 is modified to Phosphoserine. A BRCT domain is found at V939 to C1015.

The protein belongs to the ATP-dependent DNA ligase family. As to quaternary structure, isoform 3 interacts (via BRCT domain) with the nuclear DNA-repair protein XRCC1. Interacts with POLG. Interacts with POLB. It depends on Mg(2+) as a cofactor. The alpha isoform is expressed in all tissues, while the beta isoform is expressed only in the testis.

Its subcellular location is the nucleus. The enzyme catalyses ATP + (deoxyribonucleotide)n-3'-hydroxyl + 5'-phospho-(deoxyribonucleotide)m = (deoxyribonucleotide)n+m + AMP + diphosphate.. In terms of biological role, the alpha isoform interacts with DNA-repair protein XRCC1 and can correct defective DNA strand-break repair and sister chromatid exchange following treatment with ionizing radiation and alkylating agents. The beta isoform does not interact with XRCC1 and may be specifically involved in the completion of homologous recombination events that occur during meiotic prophase. In Mus musculus (Mouse), this protein is DNA ligase 3 (Lig3).